Reading from the N-terminus, the 360-residue chain is Glutamate 5-kinase (360 aa).

Lys11 contributes to the ATP binding site. Substrate-binding residues include Ser51, Asp138, and Asn150. Residues Lys278–Tyr356 enclose the PUA domain.

Belongs to the glutamate 5-kinase family.

It is found in the cytoplasm. The enzyme catalyses L-glutamate + ATP = L-glutamyl 5-phosphate + ADP. Its pathway is amino-acid biosynthesis; L-proline biosynthesis; L-glutamate 5-semialdehyde from L-glutamate: step 1/2. Functionally, catalyzes the transfer of a phosphate group to glutamate to form L-glutamate 5-phosphate. The sequence is that of Glutamate 5-kinase from Bacteroides thetaiotaomicron (strain ATCC 29148 / DSM 2079 / JCM 5827 / CCUG 10774 / NCTC 10582 / VPI-5482 / E50).